The chain runs to 371 residues: GDP-perosamine synthase (371 aa).

At lysine 186 the chain carries N6-(pyridoxal phosphate)lysine.

This sequence belongs to the DegT/DnrJ/EryC1 family. In terms of assembly, homodimer. Requires pyridoxal 5'-phosphate as cofactor.

It catalyses the reaction GDP-alpha-D-perosamine + 2-oxoglutarate = GDP-4-dehydro-alpha-D-rhamnose + L-glutamate. It participates in bacterial outer membrane biogenesis; LPS O-antigen biosynthesis. Functionally, catalyzes the synthesis of GDP-perosamine from GDP-4-keto-6-deoxy-D-mannose and L-glutamate. Can use only L-glutamate as amino donor. In vitro, can also use GDP-4-keto-3,6-dideoxymannose to produce GDP-3-deoxyperosamine. Involved in the formation of S-LPS, which is required for attachment of the protein S-layer to the outer membrane surface. This is GDP-perosamine synthase from Caulobacter vibrioides (strain ATCC 19089 / CIP 103742 / CB 15) (Caulobacter crescentus).